A 599-amino-acid chain; its full sequence is Tryptophan 2-C-methyltransferase (599 aa).

One can recognise a B12-binding domain in the interval 4–149 (KGTVALINPN…RALAEGRSAD (146 aa)). The segment at 167–197 (RVAPPALDPRAAPAPSSSPSPSPAPSSSSAP) is disordered. Residues 168–181 (VAPPALDPRAAPAP) are compositionally biased toward low complexity. The region spanning 239–492 (YREGGLGSIL…IEYERQFMFD (254 aa)) is the Radical SAM core domain. [4Fe-4S] cluster-binding residues include C253, C257, and C260.

[4Fe-4S] cluster serves as cofactor. It depends on cob(II)alamin as a cofactor.

The enzyme catalyses L-tryptophan + S-adenosyl-L-methionine = 2-methyl-L-tryptophan + S-adenosyl-L-homocysteine + H(+). In terms of biological role, involved in the biosynthetic pathway of the antibiotic thiostrepton A. First, TsrM catalyzes the transfer of a methyl group from S-adenosyl methionine (SAM) to cobalamin, leading to the formation of methylcobalamin (CH3-cobalamin) and S-adenosyl-L-homocysteine (SAH). Then the methyl group is transferred to the C2 position of tryptophan (Trp) with the concerted action of the radical SAM [4Fe-4S] center, leading to the production of methyltryptophan. This chain is Tryptophan 2-C-methyltransferase, found in Streptomyces laurentii.